A 155-amino-acid polypeptide reads, in one-letter code: 3-hydroxyacyl-[acyl-carrier-protein] dehydratase FabZ (155 aa).

The active site involves His54.

It belongs to the thioester dehydratase family. FabZ subfamily.

It localises to the cytoplasm. It catalyses the reaction a (3R)-hydroxyacyl-[ACP] = a (2E)-enoyl-[ACP] + H2O. In terms of biological role, involved in unsaturated fatty acids biosynthesis. Catalyzes the dehydration of short chain beta-hydroxyacyl-ACPs and long chain saturated and unsaturated beta-hydroxyacyl-ACPs. This chain is 3-hydroxyacyl-[acyl-carrier-protein] dehydratase FabZ, found in Burkholderia ambifaria (strain MC40-6).